A 260-amino-acid chain; its full sequence is MQHLPAPIHHARDAVQLPVAIDYPAALALRQMSMVHDELPKYLLAPEVSALLHYVPDLRRKMLLATLWNTGARINEALALTRGDFSLTPPYPFVQLATLKQRTEKAARTAGRMPAGQQTHRLVPLSDSWYVSQLQTMVATLKIPMERRNKRTGRTEKARIWEVTDRTVRTWIGEAVAAAAADGVTFSVPVTPHTFRHSYAMHMLYAGIPLKVLQSLMGHKSISSTEVYTKVFALDVAARHRVQFSMPESDAVTMLKNRHA.

In terms of domain architecture, Tyr recombinase spans 38–241 (ELPKYLLAPE…FALDVAARHR (204 aa)). Active-site residues include R73, K105, H193, R196, and H219. Y228 serves as the catalytic O-(3'-phospho-DNA)-tyrosine intermediate.

Belongs to the 'phage' integrase family.

In terms of biological role, this resolvase acts at the RfsF equivalent resolution sequence of pColBM-CL139. This is Resolvase (resD) from Escherichia coli.